The following is a 474-amino-acid chain: ATP synthase subunit beta (474 aa).

152–159 (GGAGVGKT) serves as a coordination point for ATP.

This sequence belongs to the ATPase alpha/beta chains family. F-type ATPases have 2 components, CF(1) - the catalytic core - and CF(0) - the membrane proton channel. CF(1) has five subunits: alpha(3), beta(3), gamma(1), delta(1), epsilon(1). CF(0) has four main subunits: a(1), b(1), b'(1) and c(9-12).

Its subcellular location is the cell inner membrane. It catalyses the reaction ATP + H2O + 4 H(+)(in) = ADP + phosphate + 5 H(+)(out). Functionally, produces ATP from ADP in the presence of a proton gradient across the membrane. The catalytic sites are hosted primarily by the beta subunits. In Rhodospirillum rubrum (strain ATCC 11170 / ATH 1.1.1 / DSM 467 / LMG 4362 / NCIMB 8255 / S1), this protein is ATP synthase subunit beta.